A 322-amino-acid polypeptide reads, in one-letter code: Polyisoprenyl-teichoic acid--peptidoglycan teichoic acid transferase TagT (322 aa).

Topologically, residues 1 to 19 are cytoplasmic; the sequence is MEERSQRRKKKRKLKKWVK. A helical; Signal-anchor for type II membrane protein membrane pass occupies residues 20–40; sequence VVAGLMAFLVIAAGSVGAYAF. Topologically, residues 41 to 322 are extracellular; that stretch reads VKLNNASKEA…KKELQNDLGV (282 aa).

It belongs to the LytR/CpsA/Psr (LCP) family. In terms of assembly, interacts with MreB.

The protein resides in the cell membrane. It functions in the pathway cell wall biogenesis. Functionally, may catalyze the final step in cell wall teichoic acid biosynthesis, the transfer of the anionic cell wall polymers (APs) from their lipid-linked precursor to the cell wall peptidoglycan (PG). In Bacillus subtilis (strain 168), this protein is Polyisoprenyl-teichoic acid--peptidoglycan teichoic acid transferase TagT.